The chain runs to 145 residues: AN1-type zinc finger protein 2A (145 aa).

AN1-type zinc fingers lie at residues 4-52 (PDLG…QKDV) and 94-142 (KIFT…RPTI). Residues Cys10, Cys15, Cys25, Cys28, Cys33, His36, His42, Cys44, Cys100, Cys105, Cys115, Cys118, Cys123, His126, His132, and Cys134 each coordinate Zn(2+).

Its subcellular location is the cytoplasm. It localises to the nucleus. This Homo sapiens (Human) protein is AN1-type zinc finger protein 2A (ZFAND2A).